We begin with the raw amino-acid sequence, 634 residues long: MTNSNLRTENHFDYVKITLASPERVMSWGQRTLPNGQVVGEVTKPETINYRTLKPEMDGLFCEKIFGPSKDWECHCGKYKRVRHRGIVCERCGVEVTESRVRRHRMGFINLAAPVSHVWYLKGIPSYVAILLDMPLRDVEQIVYFNCYVVLDEGDHKDLKYKQLLTEDEWLEVEDEIYAEDSTIENEPVVGIGAEALKQLLEDLDLQEVAEQLREEITGSKGQKRAKLIKRLRVIDNFIATNARPEWMVLNAIPVIPPDLRPMVQLDGGRFATSDLNDLYRRVINRNNRLARLQEILAPEIIVRNEKRMLQEAVDALVDNGRRGRTVVGANNRALKSLSDIIEGKQGRFRQNLLGKRVDYSGRSVIVVGPKLKMHQCGLPKEMAIELFQPFVIHRLIRQNIVNNIKAAKKLIQRADDEVMQVLQEVIEGHPILLNRAPTLHRLGIQAFEPKLVAGRAIQLHPLVCPAFNADFDGDQMAVHVPLAIEAQTEARMLMLASNNILSPATGEPIVTPSQDMVLGSYYLTALQPDAVKPDFGDQSKTFAGLEDVIHAFEDKRINLHDWVWVRFNGEVEDDDELTSPLDTQILEDGTQIQQWTYRRDRLDEEGALISRFLLTTVGRVVMNNTIIDAVASG.

Residues C74, C76, C89, and C92 each coordinate Zn(2+). Residues D471, D473, and D475 each contribute to the Mg(2+) site.

It belongs to the RNA polymerase beta' chain family. RpoC1 subfamily. As to quaternary structure, in cyanobacteria the RNAP catalytic core is composed of 2 alpha, 1 beta, 1 beta', 1 gamma and 1 omega subunit. When a sigma factor is associated with the core the holoenzyme is formed, which can initiate transcription. The cofactor is Mg(2+). It depends on Zn(2+) as a cofactor.

It catalyses the reaction RNA(n) + a ribonucleoside 5'-triphosphate = RNA(n+1) + diphosphate. DNA-dependent RNA polymerase catalyzes the transcription of DNA into RNA using the four ribonucleoside triphosphates as substrates. The protein is DNA-directed RNA polymerase subunit gamma of Prochlorococcus marinus (strain SARG / CCMP1375 / SS120).